A 257-amino-acid polypeptide reads, in one-letter code: tRNA pseudouridine synthase A (257 aa).

Catalysis depends on D53, which acts as the Nucleophile. Substrate is bound at residue Y111.

The protein belongs to the tRNA pseudouridine synthase TruA family. As to quaternary structure, homodimer.

It carries out the reaction uridine(38/39/40) in tRNA = pseudouridine(38/39/40) in tRNA. In terms of biological role, formation of pseudouridine at positions 38, 39 and 40 in the anticodon stem and loop of transfer RNAs. The sequence is that of tRNA pseudouridine synthase A from Xylella fastidiosa (strain M23).